The sequence spans 513 residues: Protein indeterminate-domain 11 (513 aa).

A disordered region spans residues 1 to 84 (MMNKDMLLHQ…QPGNPDPESE (84 aa)). The span at 10 to 45 (QHQQPQQDENMSNLTSASGDQASVSSGNITEASGSN) shows a compositional bias: polar residues. Residues 51–60 (QQQQEQQQQQ) show a composition bias toward low complexity. Ser89 is modified (phosphoserine). 2 C2H2-type zinc fingers span residues 99–121 (FVCEICNKGFQRDQNLQLHRRGH) and 141–171 (YVCPEASCVHHDPSRALGDLTGIKKHFCRKH). The short motif at 163–170 (IKKHFCRK) is the Nuclear localization signal element. The segment at 176–199 (WKCDKCSKKYAVQSDCKAHSKTCG) adopts a C2H2-type 2; degenerate zinc-finger fold. Zn(2+) is bound by residues Cys178, Cys181, His194, Cys198, Cys205, Cys207, His220, and Cys224. A CCHC-type 2; atypical zinc finger spans residues 203 to 226 (YRCDCGTLFSRRDSFITHRAFCEA). Residues 213-225 (RRDSFITHRAFCE) are SHR-binding. Disordered regions lie at residues 255–280 (ASHPHHHHQTQPTINVSSSSSSSHNH) and 334–358 (PQPHALTSSNPNPSNGGGGGGSLFS). A compositionally biased stretch (low complexity) spans 264–280 (TQPTINVSSSSSSSHNH).

It is found in the nucleus. Probable transcription factor. The chain is Protein indeterminate-domain 11 from Arabidopsis thaliana (Mouse-ear cress).